A 167-amino-acid chain; its full sequence is Leptin (167 aa).

The signal sequence occupies residues 1–21; the sequence is MRCGPLYQFLWLWPYLSYVEA. Cys117 and Cys167 are disulfide-bonded.

It belongs to the leptin family.

The protein localises to the secreted. Its function is as follows. Key player in the regulation of energy balance and body weight control. Once released into the circulation, has central and peripheral effects by binding LEPR, found in many tissues, which results in the activation of several major signaling pathways. In the hypothalamus, acts as an appetite-regulating factor that induces a decrease in food intake and an increase in energy consumption by inducing anorexinogenic factors and suppressing orexigenic neuropeptides, also regulates bone mass and secretion of hypothalamo-pituitary-adrenal hormones. In the periphery, increases basal metabolism, influences reproductive function, regulates pancreatic beta-cell function and insulin secretion, is pro-angiogenic for endothelial cell and affects innate and adaptive immunity. In the arcuate nucleus of the hypothalamus, activates by depolarization POMC neurons inducing FOS and SOCS3 expression to release anorexigenic peptides and inhibits by hyperpolarization NPY neurons inducing SOCS3 with a consequent reduction on release of orexigenic peptides. In addition to its known satiety inducing effect, has a modulatory role in nutrient absorption. In the intestine, reduces glucose absorption by enterocytes by activating PKC and leading to a sequential activation of p38, PI3K and ERK signaling pathways which exerts an inhibitory effect on glucose absorption. Acts as a growth factor on certain tissues, through the activation of different signaling pathways increases expression of genes involved in cell cycle regulation such as CCND1, via JAK2-STAT3 pathway, or VEGFA, via MAPK1/3 and PI3K-AKT1 pathways. May also play an apoptotic role via JAK2-STAT3 pathway and up-regulation of BIRC5 expression. Pro-angiogenic, has mitogenic activity on vascular endothelial cells and plays a role in matrix remodeling by regulating the expression of matrix metalloproteinases (MMPs) and tissue inhibitors of metalloproteinases (TIMPs). In innate immunity, modulates the activity and function of neutrophils by increasing chemotaxis and the secretion of oxygen radicals. Increases phagocytosis by macrophages and enhances secretion of pro-inflammatory mediators. Increases cytotoxic ability of NK cells. Plays a pro-inflammatory role, in synergy with IL1B, by inducing NOS2 which promotes the production of IL6, IL8 and Prostaglandin E2, through a signaling pathway that involves JAK2, PI3K, MAP2K1/MEK1 and MAPK14/p38. In adaptive immunity, promotes the switch of memory T-cells towards T helper-1 cell immune responses. Increases CD4(+)CD25(-) T-cell proliferation and reduces autophagy during TCR (T-cell receptor) stimulation, through MTOR signaling pathway activation and BCL2 up-regulation. The sequence is that of Leptin (LEP) from Bubalus bubalis (Domestic water buffalo).